A 484-amino-acid polypeptide reads, in one-letter code: Cathepsin F (484 aa).

The signal sequence occupies residues 1–19 (MAPWLQLLSLLGLLPGAVA). Residues 20-270 (APAQPRAASF…MKQAKSVGDL (251 aa)) constitute a propeptide, activation peptide. 2 N-linked (GlcNAc...) asparagine glycosylation sites follow: asparagine 160 and asparagine 195. 2 disulfide bridges follow: cysteine 292/cysteine 333 and cysteine 326/cysteine 366. Cysteine 295 is a catalytic residue. N-linked (GlcNAc...) asparagine glycans are attached at residues asparagine 367 and asparagine 378. The cysteines at positions 424 and 472 are disulfide-linked. Histidine 431 is an active-site residue. Asparagine 440 is a glycosylation site (N-linked (GlcNAc...) asparagine). The active site involves asparagine 451.

Belongs to the peptidase C1 family. As to expression, high expression levels in heart, skeletal muscle, brain, testis and ovary; moderate levels in prostate, placenta, liver and colon; and no detectable expression in peripheral leukocytes and thymus.

It localises to the lysosome. The enzyme catalyses The recombinant enzyme cleaves synthetic substrates with Phe and Leu (better than Val) in P2, with high specificity constant (kcat/Km) comparable to that of cathepsin L.. Thiol protease which is believed to participate in intracellular degradation and turnover of proteins. Has also been implicated in tumor invasion and metastasis. The protein is Cathepsin F (CTSF) of Homo sapiens (Human).